Consider the following 63-residue polypeptide: Large ribosomal subunit protein bL28 (63 aa).

It belongs to the bacterial ribosomal protein bL28 family.

This is Large ribosomal subunit protein bL28 from Clostridium novyi (strain NT).